The primary structure comprises 131 residues: Putative gamma-taxilin 2 (131 aa).

It belongs to the taxilin family. In terms of tissue distribution, ubiquitously expressed.

The chain is Putative gamma-taxilin 2 (TXLNGY) from Homo sapiens (Human).